The following is a 319-amino-acid chain: tRNA U34 carboxymethyltransferase (319 aa).

Carboxy-S-adenosyl-L-methionine is bound by residues K88, W102, K107, G126, 176-177 (LE), M192, Y196, and R311.

Belongs to the class I-like SAM-binding methyltransferase superfamily. CmoB family. Homotetramer.

The enzyme catalyses carboxy-S-adenosyl-L-methionine + 5-hydroxyuridine(34) in tRNA = 5-carboxymethoxyuridine(34) in tRNA + S-adenosyl-L-homocysteine + H(+). Functionally, catalyzes carboxymethyl transfer from carboxy-S-adenosyl-L-methionine (Cx-SAM) to 5-hydroxyuridine (ho5U) to form 5-carboxymethoxyuridine (cmo5U) at position 34 in tRNAs. The protein is tRNA U34 carboxymethyltransferase of Pseudomonas syringae pv. syringae (strain B728a).